A 246-amino-acid polypeptide reads, in one-letter code: Large ribosomal subunit protein uL3 (246 aa).

N5-methylglutamine is present on Gln-151.

It belongs to the universal ribosomal protein uL3 family. As to quaternary structure, part of the 50S ribosomal subunit. Forms a cluster with proteins L14 and L19. Post-translationally, methylated by PrmB.

Functionally, one of the primary rRNA binding proteins, it binds directly near the 3'-end of the 23S rRNA, where it nucleates assembly of the 50S subunit. The protein is Large ribosomal subunit protein uL3 of Bartonella quintana (strain Toulouse) (Rochalimaea quintana).